Consider the following 211-residue polypeptide: MEPPLKRCRLCHQALPKLPQLPFEMIDKILSHLPFDLHVDVVGASAATRLRALRRPDRLTRYHEYDLAADELFAAHWNIEAADPARPYVGQLCRSTCASAAQKFFNERVPRAAAMCMLNAPRAESDSVLTRRWNWWGLTRTLLIHEANSGRGRRPARVRVDADEACIGYHAPFCDASVFEFNAQPDHVVFVLLDDDKIELNMYGKRVYRIV.

Its function is as follows. Involved in late/very late gene activation. The protein is Late expression factor 7 (LEF-7) of Orgyia pseudotsugata multicapsid polyhedrosis virus (OpMNPV).